The chain runs to 231 residues: Cytochrome c oxidase assembly factor 7 (231 aa).

At A2 the chain carries N-acetylalanine. Sel1-like repeat units lie at residues 34–66 (PDGCYRLVDYLEGIRKNFDEAAKVLKFNCEENQ), 68–104 (SDSCYKLGAYYVTGKGGLTQDLKAAARCFLMACEKPG), 108–146 (IAACHNVGLLAHDGQVNEDGQPDLGKARDYYTRACDGGY), 147–183 (TSSCFNLSAMFLQGAPGFPKDMDLACKYSMKACDLGH), and 184–219 (IWACANASRMYKLGDGVDKDEAKAEVLKNRAQQLHK).

Belongs to the hcp beta-lactamase family. As to quaternary structure, interacts with CHCHD4/MIA40 through transient intermolecular disulfide bonds.

The protein localises to the mitochondrion intermembrane space. Functionally, required for assembly of mitochondrial respiratory chain complex I and complex IV. This chain is Cytochrome c oxidase assembly factor 7 (COA7), found in Homo sapiens (Human).